Here is a 689-residue protein sequence, read N- to C-terminus: Elongation factor G (689 aa).

The tr-type G domain occupies 8–282 (DKVRNIGIMA…AIVRYLPSPL (275 aa)). Residues 17-24 (AHIDAGKT), 81-85 (DTPGH), and 135-138 (NKMD) each bind GTP.

Belongs to the TRAFAC class translation factor GTPase superfamily. Classic translation factor GTPase family. EF-G/EF-2 subfamily.

Its subcellular location is the cytoplasm. Functionally, catalyzes the GTP-dependent ribosomal translocation step during translation elongation. During this step, the ribosome changes from the pre-translocational (PRE) to the post-translocational (POST) state as the newly formed A-site-bound peptidyl-tRNA and P-site-bound deacylated tRNA move to the P and E sites, respectively. Catalyzes the coordinated movement of the two tRNA molecules, the mRNA and conformational changes in the ribosome. The chain is Elongation factor G from Thermoanaerobacter pseudethanolicus (strain ATCC 33223 / 39E) (Clostridium thermohydrosulfuricum).